Here is a 403-residue protein sequence, read N- to C-terminus: Chromatin structure-remodeling complex subunit SFH1 (403 aa).

Residues 58–115 are disordered; that stretch reads FPTFDIDSDSNDEEQSSASAGNDDPQANANGGEAAGVNGQGSGDGGSANTGAGRHGKS. Residues 63 to 72 show a composition bias toward acidic residues; the sequence is IDSDSNDEEQ. Residues 84–94 show a composition bias toward low complexity; sequence ANANGGEAAGV. Gly residues predominate over residues 95 to 105; sequence NGQGSGDGGSA.

This sequence belongs to the SNF5 family.

Its subcellular location is the nucleus. In terms of biological role, part of the chromatin structure-remodeling complex (RSC) which is involved in transcription regulation and nucleosome positioning. RSC is responsible for the transfer of a histone octamer from a nucleosome core particle to naked DNA. The reaction requires ATP and involves an activated RSC-nucleosome intermediate. Remodeling reaction also involves DNA translocation, DNA twist and conformational change. As a reconfigurer of centromeric and flanking nucleosomes, RSC complex is required both for proper kinetochore function in chromosome segregation and, via a PKC1-dependent signaling pathway, for organization of the cellular cytoskeleton. This subunit is essential for mitotic growth and required for cell cycle progression. In Candida glabrata (strain ATCC 2001 / BCRC 20586 / JCM 3761 / NBRC 0622 / NRRL Y-65 / CBS 138) (Yeast), this protein is Chromatin structure-remodeling complex subunit SFH1 (SFH1).